A 229-amino-acid chain; its full sequence is Large ribosomal subunit protein uL1 (229 aa).

This sequence belongs to the universal ribosomal protein uL1 family. Part of the 50S ribosomal subunit.

In terms of biological role, binds directly to 23S rRNA. The L1 stalk is quite mobile in the ribosome, and is involved in E site tRNA release. Functionally, protein L1 is also a translational repressor protein, it controls the translation of the L11 operon by binding to its mRNA. The protein is Large ribosomal subunit protein uL1 of Chlorobium chlorochromatii (strain CaD3).